The primary structure comprises 382 residues: MSGVSALFLPPASTAGADGELAVWWVQDGECRRAPFAQALAEIRAPWRLYLPVEAVTACAVNLPTQKARWLRQSLPFAVEEQLADDVEQMHLALGPALADGRHRVFAVQRTWLAAWLALAEGAGKAPASLHVDADCLPGEGSCLFWLEERWLLGGSGAVRLACGSEDWPVLRDSCPPPQRAFAAQEVAPLEGVEVQALAGNPHVWLSEQPLGTDLAQAEFAARQQSSQWRRWRPLLGLVGLWLVLQWGFTLVQAWQLQREGDRYAAQSAELYRQLFPEDRKLINLRAQFDQHLADSASSGGEGQLLGLLGQAATVIGGEPTVSVEQLDFSAARGDVALQVRAPGFDVLERLRSRLSESGLAVQLGSASRDGSTVSARLVIGG.

Residues 1 to 233 (MSGVSALFLP…QQSSQWRRWR (233 aa)) are Cytoplasmic-facing. The helical transmembrane segment at 234–254 (PLLGLVGLWLVLQWGFTLVQA) threads the bilayer. The Periplasmic segment spans residues 255–382 (WQLQREGDRY…TVSARLVIGG (128 aa)).

This sequence belongs to the GSP L family. As to quaternary structure, type II secretion system is composed of four main components: the outer membrane complex, the inner membrane complex, the cytoplasmic secretion ATPase and the periplasm-spanning pseudopilus. Forms homodimers. Interacts with XcpZ/GspM. Interacts with XcpR/GspE and XcpS/GspF.

It localises to the cell inner membrane. Its function is as follows. Inner membrane component of the type II secretion system required for the energy-dependent secretion of extracellular factors such as proteases and toxins from the periplasm. Plays a role in the complex assembly and recruits XcpZ resulting in a stable complex in the inner membrane. Provides thus a link between the energy-providing XcpR protein in the cytoplasm and the rest of the T2SS machinery. The chain is Type II secretion system protein L (xcpY) from Pseudomonas aeruginosa (strain ATCC 15692 / DSM 22644 / CIP 104116 / JCM 14847 / LMG 12228 / 1C / PRS 101 / PAO1).